Consider the following 82-residue polypeptide: ATP synthase subunit c (82 aa).

2 helical membrane-spanning segments follow: residues 5–25 (MSLVAGLIAIGAGIAVGFGAI) and 55–75 (FLIIALAFMETLTIYGLVIAF).

It belongs to the ATPase C chain family. F-type ATPases have 2 components, F(1) - the catalytic core - and F(0) - the membrane proton channel. F(1) has five subunits: alpha(3), beta(3), gamma(1), delta(1), epsilon(1). F(0) has three main subunits: a(1), b(2) and c(10-14). The alpha and beta chains form an alternating ring which encloses part of the gamma chain. F(1) is attached to F(0) by a central stalk formed by the gamma and epsilon chains, while a peripheral stalk is formed by the delta and b chains.

It localises to the cell membrane. Its function is as follows. F(1)F(0) ATP synthase produces ATP from ADP in the presence of a proton or sodium gradient. F-type ATPases consist of two structural domains, F(1) containing the extramembraneous catalytic core and F(0) containing the membrane proton channel, linked together by a central stalk and a peripheral stalk. During catalysis, ATP synthesis in the catalytic domain of F(1) is coupled via a rotary mechanism of the central stalk subunits to proton translocation. Functionally, key component of the F(0) channel; it plays a direct role in translocation across the membrane. A homomeric c-ring of between 10-14 subunits forms the central stalk rotor element with the F(1) delta and epsilon subunits. The chain is ATP synthase subunit c from Carboxydothermus hydrogenoformans (strain ATCC BAA-161 / DSM 6008 / Z-2901).